Consider the following 477-residue polypeptide: Tripartite motif-containing protein 72 (477 aa).

The Zn(2+) site is built by C14, C17, C29, H31, C34, C37, C53, C56, C86, H89, C97, D100, C105, C108, H114, and H117. The segment at 14-57 (CPLCLQLFDAPVTAECGHSFCRACLSRVAGEPAADGTVNCPCCQ) adopts an RING-type zinc-finger fold. A B box-type zinc finger spans residues 81 to 122 (VPQGHCEEHLDPLSIYCEQDRVLVCGVCASLGSHRGHRLLPA). A coiled-coil region spans residues 135 to 232 (QQKLQLQEAS…EKVLEEVADK (98 aa)). Residue S255 is modified to Phosphoserine. One can recognise a B30.2/SPRY domain in the interval 271-475 (DFKFQVWRKM…PLLLVGPDGQ (205 aa)).

The protein belongs to the TRIM/RBCC family. Homodimer. Homooligomer; disulfide-linked. Oligomerizes on the phospholipid membrane. Interacts with DYSF and CAV3. In terms of processing, disulfide bond formation at Cys-242 occurs in case of membrane damage that cause the entry of the oxidized milieu of the extracellular space, resulting in homooligomerization. Muscle-specific.

The protein resides in the cell membrane. It is found in the sarcolemma. Its subcellular location is the cytoplasmic vesicle membrane. The enzyme catalyses S-ubiquitinyl-[E2 ubiquitin-conjugating enzyme]-L-cysteine + [acceptor protein]-L-lysine = [E2 ubiquitin-conjugating enzyme]-L-cysteine + N(6)-ubiquitinyl-[acceptor protein]-L-lysine.. It participates in protein modification; protein ubiquitination. Specifically binds phosphatidylserine. The binding to phospholipids enhances ubiquitination activity. Muscle-specific E3 ubiquitin-protein ligase that plays a central role in cell membrane repair by nucleating the assembly of the repair machinery at injury sites. Its ubiquitination activity is mediated by E2 ubiquitin-conjugating enzymes UBE2D1, UBE2D2 and UBE2D3. Acts as a sensor of oxidation: upon membrane damage, entry of extracellular oxidative environment results in disulfide bond formation and homooligomerization at the injury site. This oligomerization acts as a nucleation site for recruitment of TRIM72-containing vesicles to the injury site, leading to membrane patch formation. Probably acts upstream of the Ca(2+)-dependent membrane resealing process. Required for transport of DYSF to sites of cell injury during repair patch formation. Regulates membrane budding and exocytosis. May be involved in the regulation of the mobility of KCNB1-containing endocytic vesicles. In Oryctolagus cuniculus (Rabbit), this protein is Tripartite motif-containing protein 72.